The chain runs to 252 residues: Triosephosphate isomerase (252 aa).

A substrate-binding site is contributed by 10–12; sequence NWK. The active-site Electrophile is His96. The active-site Proton acceptor is Glu168. Residues Gly174, Ser214, and 235 to 236 contribute to the substrate site; that span reads GG.

This sequence belongs to the triosephosphate isomerase family. As to quaternary structure, homodimer.

It is found in the cytoplasm. It carries out the reaction D-glyceraldehyde 3-phosphate = dihydroxyacetone phosphate. It participates in carbohydrate biosynthesis; gluconeogenesis. Its pathway is carbohydrate degradation; glycolysis; D-glyceraldehyde 3-phosphate from glycerone phosphate: step 1/1. In terms of biological role, involved in the gluconeogenesis. Catalyzes stereospecifically the conversion of dihydroxyacetone phosphate (DHAP) to D-glyceraldehyde-3-phosphate (G3P). This chain is Triosephosphate isomerase, found in Streptococcus pyogenes serotype M6 (strain ATCC BAA-946 / MGAS10394).